The primary structure comprises 432 residues: Gamma-glutamyl phosphate reductase (432 aa).

The protein belongs to the gamma-glutamyl phosphate reductase family.

It localises to the cytoplasm. It carries out the reaction L-glutamate 5-semialdehyde + phosphate + NADP(+) = L-glutamyl 5-phosphate + NADPH + H(+). Its pathway is amino-acid biosynthesis; L-proline biosynthesis; L-glutamate 5-semialdehyde from L-glutamate: step 2/2. Functionally, catalyzes the NADPH-dependent reduction of L-glutamate 5-phosphate into L-glutamate 5-semialdehyde and phosphate. The product spontaneously undergoes cyclization to form 1-pyrroline-5-carboxylate. This Methylorubrum extorquens (strain PA1) (Methylobacterium extorquens) protein is Gamma-glutamyl phosphate reductase.